The chain runs to 335 residues: Polyprenol dehydrogenase (335 aa).

Positions 55, 208, 212, and 245 each coordinate NAD(+). Tyr208 acts as the Proton acceptor in catalysis.

Belongs to the short-chain dehydrogenases/reductases (SDR) family.

The protein localises to the lipid droplet. It localises to the secreted. It carries out the reaction a di-trans,poly-cis-polyprenol + NAD(+) = a di-trans,poly-cis-polyprenal + NADH + H(+). The enzyme catalyses a di-trans,poly-cis-polyprenol + NADP(+) = a di-trans,poly-cis-polyprenal + NADPH + H(+). The catalysed reaction is a di-trans,poly-cis-dolichol + NADP(+) = a di-trans,poly-cis-dolichal + NADPH + H(+). It catalyses the reaction a di-trans,poly-cis-dolichol + NAD(+) = a di-trans,poly-cis-dolichal + NADH + H(+). Its pathway is protein modification; protein glycosylation. Functionally, oxidoreductase that plays a key role in early steps of protein N-linked glycosylation by mediating two non-consecutive steps in dolichol biosynthesis. Acts both as a NAD(+)-dependent dehydrogenase and as a NADPH-dependent reductase during the conversion of polyprenol into dolichol. First catalyzes the NAD(+)-dependent dehydrogenation of polyprenol into polyprenal; polyprenal is then reduced into dolichal by SRD5A3. It then catalyzes the NADPH-dependent reduction of dolichal into dolichol. May also acts as a positive regulator of starvation-induced autophagy. The protein is Polyprenol dehydrogenase (Dhrsx) of Mus musculus (Mouse).